The following is a 99-amino-acid chain: UPF0473 protein LEUM_0559 (99 aa).

The protein belongs to the UPF0473 family.

This is UPF0473 protein LEUM_0559 from Leuconostoc mesenteroides subsp. mesenteroides (strain ATCC 8293 / DSM 20343 / BCRC 11652 / CCM 1803 / JCM 6124 / NCDO 523 / NBRC 100496 / NCIMB 8023 / NCTC 12954 / NRRL B-1118 / 37Y).